Here is a 141-residue protein sequence, read N- to C-terminus: Small ribosomal subunit protein uS19 (141 aa).

Belongs to the universal ribosomal protein uS19 family.

Protein S19 forms a complex with S13 that binds strongly to the 16S ribosomal RNA. This is Small ribosomal subunit protein uS19 from Halorubrum lacusprofundi (strain ATCC 49239 / DSM 5036 / JCM 8891 / ACAM 34).